Consider the following 432-residue polypeptide: Transcriptional adapter 3-A (432 aa).

Disordered stretches follow at residues 90 to 127 (HELG…RNMQ) and 275 to 314 (SPVE…TKSL). Residues 293–305 (DGASTSPRSQNKP) are compositionally biased toward polar residues. The stretch at 335–398 (ADDSEDEVLA…NEVMDAFRKI (64 aa)) forms a coiled coil.

This sequence belongs to the NGG1 family.

The protein localises to the nucleus. Its function is as follows. Functions as a component of the PCAF complex. The PCAF complex is capable of efficiently acetylating histones in a nucleosomal context. The protein is Transcriptional adapter 3-A (tada3-a) of Xenopus laevis (African clawed frog).